A 414-amino-acid chain; its full sequence is Transcriptional repressor protein YY1 (414 aa).

Residues 1-170 are interaction with the SMAD1/SMAD4 complex; it reads MASGDTLYIA…GGGSSSSGGG (170 aa). The tract at residues 33-81 is disordered; it reads VETIETTVVGEEEEEDDDDEDGGGGDHGGGGGHGHAGHHHHHHHHHHHP. Acidic residues predominate over residues 42–55; sequence GEEEEEDDDDEDGG. Positions 57–66 are enriched in gly residues; that stretch reads GDHGGGGGHG. The span at 67 to 81 shows a compositional bias: basic residues; that stretch reads HAGHHHHHHHHHHHP. Residues 116-260 form a gly-rich region involved in interaction with HCFC1 region; the sequence is DDSDGLRAED…YSEYMTGKKL (145 aa). S118 bears the Phosphoserine; by CK2 mark. A disordered region spans residues 157-203; that stretch reads GKSGGGGSSSSGGGRVKKGGGKKSGKKSYLSGGAGAAGGGGADPGNK. A compositionally biased stretch (gly residues) spans 158 to 170; sequence KSGGGGSSSSGGG. A compositionally biased stretch (basic residues) spans 171 to 182; the sequence is RVKKGGGKKSGK. Glycyl lysine isopeptide (Lys-Gly) (interchain with G-Cter in SUMO2) cross-links involve residues K182 and K183. S187 carries the phosphoserine modification. The span at 188 to 199 shows a compositional bias: gly residues; it reads GGAGAAGGGGAD. Glycyl lysine isopeptide (Lys-Gly) (interchain with G-Cter in SUMO2) cross-links involve residues K208 and K230. S247 is modified (phosphoserine). The segment at 257 to 341 is involved in nuclear matrix association; it reads GKKLPPGGIP…KAFVESSKLK (85 aa). Residues K286 and K288 each participate in a glycyl lysine isopeptide (Lys-Gly) (interchain with G-Cter in SUMO2) cross-link. The interval 295–414 is binding to DNA; that stretch reads TIACPHKGCT…LTHAKAKNNQ (120 aa). 3 C2H2-type zinc fingers span residues 296–320, 325–347, and 353–377; these read IACP…LHTH, HVCA…QLVH, and FQCT…VRIH. Positions 298, 303, 316, 320, 327, 330, 343, 347, 355, 360, 373, and 377 each coordinate Zn(2+). The involved in repression of activated transcription stretch occupies residues 333–371; that stretch reads AFVESSKLKRHQLVHTGEKPFQCTFEGCGKRFSLDFNLR. Positions 371-397 are involved in masking transactivation domain; sequence RTHVRIHTGDRPYVCPFDGCNKKFAQS. T378 carries the phosphothreonine modification. A C2H2-type 4 zinc finger spans residues 383–407; it reads YVCPFDGCNKKFAQSTNLKSHILTH. 4 residues coordinate Zn(2+): C385, C390, H403, and H407. Residues K409 and K411 each participate in a glycyl lysine isopeptide (Lys-Gly) (interchain with G-Cter in SUMO2) cross-link.

This sequence belongs to the YY transcription factor family. In terms of assembly, interacts with YAF2 through the region encompassing the first and second zinc fingers. Component of the chromatin remodeling INO80 complex; specifically part of a complex module associated with the DBINO domain of INO80. Interacts with EED and EZH2; the interactions are indicative for an association with the PRC2/EED-EZH2 complex. Interacts with SFMBT2. Found in a complex with SMAD1 and SMAD4. Found in a complex with YY1, SIN3A and HDAC1. Accessory component of the polycomb repressive deubiquitinase (PR-DUB) complex, at least composed of BAP1, one of ASXL1, ASXL2 or (probably) ASXL3 and one of MBD5 or MBD6; the PR-DUB core associates with a number of accessory proteins, including FOXK1, FOXK2, KDM1B, HCFC1, YY1 and OGT. Interacts (via Gly-rich region) with HCFC1; the interaction is direct. Interacts (via C-terminal zinc-finger domains) with BAP1 (via ULD domain); the interaction is direct and requires HCFC1. Post-translationally, phosphorylation at Ser-118 by CK2 prevents proteolytic cleavage by caspase-7 (CASP7) during apoptosis. In terms of processing, proteolytically cleaved by caspase-7 (CASP7) in response to apoptosis. Phosphorylation at Ser-118 protects against proteolytic cleavage. Transiently poly-ADP-ribosylated by PARP1 upon DNA damage, with the effect of decreasing affinity of YY1 to its cognate DNA binding sites. Post-translationally, ubiquitinated.

It localises to the nucleus matrix. Its function is as follows. Multifunctional transcription factor that exhibits positive and negative control on a large number of cellular and viral genes by binding to sites overlapping the transcription start site. Binds to the consensus sequence 5'-CCGCCATNTT-3'; some genes have been shown to contain a longer binding motif allowing enhanced binding; the initial CG dinucleotide can be methylated greatly reducing the binding affinity. The effect on transcription regulation is depending upon the context in which it binds and diverse mechanisms of action include direct activation or repression, indirect activation or repression via cofactor recruitment, or activation or repression by disruption of binding sites or conformational DNA changes. Its activity is regulated by transcription factors and cytoplasmic proteins that have been shown to abrogate or completely inhibit YY1-mediated activation or repression. For example, it acts as a repressor in absence of adenovirus E1A protein but as an activator in its presence. Acts synergistically with the SMAD1 and SMAD4 in bone morphogenetic protein (BMP)-mediated cardiac-specific gene expression. Binds to SMAD binding elements (SBEs) (5'-GTCT/AGAC-3') within BMP response element (BMPRE) of cardiac activating regions. May play an important role in development and differentiation. Proposed to recruit the PRC2/EED-EZH2 complex to target genes that are transcriptional repressed. Involved in DNA repair. In vitro, binds to DNA recombination intermediate structures (Holliday junctions). Plays a role in regulating enhancer activation. Recruits the PR-DUB complex to specific gene-regulatory regions. Functionally, proposed core component of the chromatin remodeling INO80 complex which is involved in transcriptional regulation, DNA replication and probably DNA repair; proposed to target the INO80 complex to YY1-responsive elements. This Homo sapiens (Human) protein is Transcriptional repressor protein YY1 (YY1).